The following is a 406-amino-acid chain: Nicotinate phosphoribosyltransferase (406 aa).

H226 carries the phosphohistidine; by autocatalysis modification.

It belongs to the NAPRTase family. Transiently phosphorylated on a His residue during the reaction cycle. Phosphorylation strongly increases the affinity for substrates and increases the rate of nicotinate D-ribonucleotide production. Dephosphorylation regenerates the low-affinity form of the enzyme, leading to product release.

It catalyses the reaction nicotinate + 5-phospho-alpha-D-ribose 1-diphosphate + ATP + H2O = nicotinate beta-D-ribonucleotide + ADP + phosphate + diphosphate. It participates in cofactor biosynthesis; NAD(+) biosynthesis; nicotinate D-ribonucleotide from nicotinate: step 1/1. Catalyzes the synthesis of beta-nicotinate D-ribonucleotide from nicotinate and 5-phospho-D-ribose 1-phosphate at the expense of ATP. The polypeptide is Nicotinate phosphoribosyltransferase (Verminephrobacter eiseniae (strain EF01-2)).